Consider the following 164-residue polypeptide: Neurotrophin-3 (164 aa).

The signal sequence occupies residues 1–3; the sequence is IQS. Positions 4–120 are excised as a propeptide; it reads TNMDQQGSLT…ALNRTSRRKR (117 aa). An N-linked (GlcNAc...) asparagine glycan is attached at Asn113.

It belongs to the NGF-beta family.

The protein resides in the secreted. Seems to promote the survival of visceral and proprioceptive sensory neurons. The chain is Neurotrophin-3 (NTF3) from Sanzinia madagascariensis (Madagascar tree boa).